The primary structure comprises 128 residues: Large ribosomal subunit protein bL19 (128 aa).

The protein belongs to the bacterial ribosomal protein bL19 family.

In terms of biological role, this protein is located at the 30S-50S ribosomal subunit interface and may play a role in the structure and function of the aminoacyl-tRNA binding site. The chain is Large ribosomal subunit protein bL19 from Paraburkholderia xenovorans (strain LB400).